We begin with the raw amino-acid sequence, 357 residues long: Protein RecA (357 aa).

An ATP-binding site is contributed by 71–78 (GPESSGKT).

This sequence belongs to the RecA family.

Its subcellular location is the cytoplasm. In terms of biological role, can catalyze the hydrolysis of ATP in the presence of single-stranded DNA, the ATP-dependent uptake of single-stranded DNA by duplex DNA, and the ATP-dependent hybridization of homologous single-stranded DNAs. It interacts with LexA causing its activation and leading to its autocatalytic cleavage. This is Protein RecA from Ehrlichia ruminantium (strain Gardel).